We begin with the raw amino-acid sequence, 45 residues long: Large ribosomal subunit protein bL36 (45 aa).

Residues 26–45 (VINKKDPNRKQRQKGPARKK) form a disordered region. Over residues 35–45 (KQRQKGPARKK) the composition is skewed to basic residues.

Belongs to the bacterial ribosomal protein bL36 family.

The sequence is that of Large ribosomal subunit protein bL36 from Protochlamydia amoebophila (strain UWE25).